A 347-amino-acid polypeptide reads, in one-letter code: UDP-N-acetylenolpyruvoylglucosamine reductase (347 aa).

The region spanning 16–187 is the FAD-binding PCMH-type domain; that stretch reads AIEQCSHYLV…IAVGLKLPKT (172 aa). Residue Arg163 is part of the active site. Ser233 functions as the Proton donor in the catalytic mechanism. Residue Glu328 is part of the active site.

The protein belongs to the MurB family. FAD is required as a cofactor.

It localises to the cytoplasm. It catalyses the reaction UDP-N-acetyl-alpha-D-muramate + NADP(+) = UDP-N-acetyl-3-O-(1-carboxyvinyl)-alpha-D-glucosamine + NADPH + H(+). Its pathway is cell wall biogenesis; peptidoglycan biosynthesis. Functionally, cell wall formation. This chain is UDP-N-acetylenolpyruvoylglucosamine reductase, found in Vibrio vulnificus (strain YJ016).